The primary structure comprises 345 residues: tRNA-specific 2-thiouridylase MnmA 1 (345 aa).

ATP is bound by residues 9–16 (GMSGGIDS) and L35. C96 (nucleophile) is an active-site residue. A disulfide bridge connects residues C96 and C191. G120 lines the ATP pocket. Positions 138 to 140 (KDQ) are interaction with tRNA. The active-site Cysteine persulfide intermediate is the C191. The interval 293-294 (RY) is interaction with tRNA.

Belongs to the MnmA/TRMU family.

The protein localises to the cytoplasm. It catalyses the reaction S-sulfanyl-L-cysteinyl-[protein] + uridine(34) in tRNA + AH2 + ATP = 2-thiouridine(34) in tRNA + L-cysteinyl-[protein] + A + AMP + diphosphate + H(+). Catalyzes the 2-thiolation of uridine at the wobble position (U34) of tRNA, leading to the formation of s(2)U34. The protein is tRNA-specific 2-thiouridylase MnmA 1 of Aliarcobacter butzleri (strain RM4018) (Arcobacter butzleri).